Reading from the N-terminus, the 273-residue chain is NADPH-dependent 7-cyano-7-deazaguanine reductase (273 aa).

80–82 (VES) is a substrate binding site. 82-83 (SK) is a binding site for NADPH. The Thioimide intermediate role is filled by Cys-180. Asp-187 acts as the Proton donor in catalysis. Residue 219–220 (HE) participates in substrate binding. 248–249 (RG) is a binding site for NADPH.

It belongs to the GTP cyclohydrolase I family. QueF type 2 subfamily. Homodimer.

The protein resides in the cytoplasm. The enzyme catalyses 7-aminomethyl-7-carbaguanine + 2 NADP(+) = 7-cyano-7-deazaguanine + 2 NADPH + 3 H(+). It functions in the pathway tRNA modification; tRNA-queuosine biosynthesis. Functionally, catalyzes the NADPH-dependent reduction of 7-cyano-7-deazaguanine (preQ0) to 7-aminomethyl-7-deazaguanine (preQ1). In Bordetella parapertussis (strain 12822 / ATCC BAA-587 / NCTC 13253), this protein is NADPH-dependent 7-cyano-7-deazaguanine reductase.